Consider the following 273-residue polypeptide: MALEAMNTPTSSFTRIETKEDLMNDAVFIEPWLKRKRSKRQRSHSPSSSSSSPPRSRPKSQNQDLTEEEYLALCLLMLAKDQPSQTRFHQQSQSLTPPPESKNLPYKCNVCEKAFPSYQALGGHKASHRIKPPTVISTTADDSTAPTISIVAGEKHPIAASGKIHECSICHKVFPTGQALGGHKRCHYEGNLGGGGGGGSKSISHSGSVSSTVSEERSHRGFIDLNLPALPELSLHHNPIVDEEILSPLTGKKPLLLTDHDQVIKKEDLSLKI.

A disordered region spans residues 33–64 (LKRKRSKRQRSHSPSSSSSSPPRSRPKSQNQD). The span at 34-43 (KRKRSKRQRS) shows a compositional bias: basic residues. The span at 44 to 54 (HSPSSSSSSPP) shows a compositional bias: low complexity. 2 consecutive C2H2-type zinc fingers follow at residues 106-128 (YKCNVCEKAFPSYQALGGHKASH) and 165-187 (HECSICHKVFPTGQALGGHKRCH). Residues 195–215 (GGGGGSKSISHSGSVSSTVSE) are disordered. The segment covering 201–213 (KSISHSGSVSSTV) has biased composition (low complexity).

As to expression, expressed in roots, radicles, cotyledons, hypocotyls, leaf veins, stems, sepals, petals, stamens, placenta, funiculi and maturated seeds.

The protein localises to the nucleus. Its function is as follows. Transcriptional repressor involved in the inhibition of plant growth under abiotic stress conditions. Can repress the expression of various genes, including osmotic stress and abscisic acid-repressive genes and auxin-inducible genes, by binding to their promoter regions in a DNA sequence-specific manner. Acts as a negative regulator of abscisic acid (ABA) signaling during seed germination. Probably involved in jasmonate (JA) early signaling response. May regulate the expression of the JA biosynthesis gene LOX3 and control the expression of TIFY10A/JAZ1, a key repressor in the JA signaling cascade. May act as a positive regulator of leaf senescence. Has been identified as a suppressor of the deficiency of yeast snf4 mutant to grow on non-fermentable carbon source. In Arabidopsis thaliana (Mouse-ear cress), this protein is Zinc finger protein AZF2 (AZF2).